The following is a 510-amino-acid chain: Protein disulfide-isomerase (510 aa).

The N-terminal stretch at 1–20 (MLRRALLCLALTALFRAGAG) is a signal peptide. The 110-residue stretch at 27 to 136 (HVLVLHKGNF…IVNWLKKRTG (110 aa)) folds into the Thioredoxin 1 domain. Active-site nucleophile residues include cysteine 55 and cysteine 58. Cysteine 55 and cysteine 58 are joined by a disulfide. Lysine 202 is modified (N6-acetyllysine). Lysine 224 and lysine 273 each carry N6-succinyllysine. Phosphoserine occurs at positions 333 and 359. The Thioredoxin 2 domain occupies 351-477 (GKIKPHLMSQ…FKKFLESGGQ (127 aa)). Residues cysteine 399 and cysteine 402 each act as nucleophile in the active site. An intrachain disulfide couples cysteine 399 to cysteine 402. Residue serine 429 is modified to Phosphoserine. A disordered region spans residues 473–510 (ESGGQDGAGDDDDLEDLEEAEEPDLEEDDDQKAVKDEL). Positions 480-502 (AGDDDDLEDLEEAEEPDLEEDDD) are enriched in acidic residues. Residues 507-510 (KDEL) carry the Prevents secretion from ER motif.

The protein belongs to the protein disulfide isomerase family. As to quaternary structure, heterodimer; heterodimerizes with the protein microsomal triglyceride transfer MTTP. Homodimer. Monomers and homotetramers may also occur. Interacts with P4HA2, forming a heterotetramer consisting of 2 alpha subunits (P4HA2) and 2 beta (P4HB), where P4HB plays the role of a structural subunit; this tetramer catalyzes the formation of 4-hydroxyproline in collagen. Also constitutes the structural subunit of the microsomal triacylglycerol transfer protein MTTP in mammalian cells. Stabilizes both enzymes and retain them in the ER without contributing to the catalytic activity. Binds UBQLN1. Interacts with ERO1B. Interacts with ILDR2. Interacts with ERN1/IRE1A (via N-terminus); the interaction is enhanced by phosphorylation of P4HB by FAM20C in response to endoplasmic reticulum stress and results in attenuation of ERN1 activity. Post-translationally, phosphorylation of Ser-359 by FAM20C is induced by endoplasmic reticulum stress and results in a functional switch from oxidoreductase to molecular chaperone. It also promotes interaction with ERN1.

The protein resides in the endoplasmic reticulum. Its subcellular location is the endoplasmic reticulum lumen. It is found in the melanosome. The protein localises to the cell membrane. It carries out the reaction Catalyzes the rearrangement of -S-S- bonds in proteins.. This multifunctional protein catalyzes the formation, breakage and rearrangement of disulfide bonds. At the cell surface, seems to act as a reductase that cleaves disulfide bonds of proteins attached to the cell. May therefore cause structural modifications of exofacial proteins. Inside the cell, seems to form/rearrange disulfide bonds of nascent proteins. At high concentrations and following phosphorylation by FAM20C, functions as a chaperone that inhibits aggregation of misfolded proteins. At low concentrations, facilitates aggregation (anti-chaperone activity). May be involved with other chaperones in the structural modification of the TG precursor in hormone biogenesis. Also acts as a structural subunit of various enzymes such as prolyl 4-hydroxylase and microsomal triacylglycerol transfer protein MTTP. Receptor for LGALS9; the interaction retains P4HB at the cell surface of Th2 T helper cells, increasing disulfide reductase activity at the plasma membrane, altering the plasma membrane redox state and enhancing cell migration. The protein is Protein disulfide-isomerase (P4HB) of Bos taurus (Bovine).